The following is a 590-amino-acid chain: MDLMNGQASSVTIAATVSEKSSSSESLSEKGSELKKSFDAVVFDVLKVTPEEYAGQITLMDVPVFKAIQPDELSSCGWNKKEKYSSAPNAVAFTRRFNHVSFWVVREILHAQTLKIRAEVLSHYIKTAKKLYELNNLHALMAVVSGLQSAPIFRLTKTWALLSRKDKTTFEKLEYVMSKEDNYKRLRDYISSLKMTPCIPYLGIYLSDLTYIDSAYPSTGSILENEQRSNLMNNILRIISDLQQSCEYDIPILPHVQKYLNSVQYIEELQKFVEDDNYKLSLKIEPGASTPRSAASREDLAGPDIGASPQGGRKSSAAAAAAAAAEGALLPQTPPSPRNLIPHGHRKCHSLGYNFIHKMNTAEFKSATFPNAGPRHLLDDSVMEPHAPSRGQAESSTLSSGISIGSSDGSELSEETSWPAFERNRLYHSLGPVTRVPRNGYRSHTKASSSAESEDLAVHLYPGAVTIQGVLRRKTLLKEGKKPTVASWTKYWAALCGTQLFYYAAKSLKATERKHFKSTSNKNVSVVGWMVMMADDPEHPDLFLLTDSEKGNSYKFQAGSRMNAMLWFKHLSAACQSNKQQVPTNLMTFE.

A Ras-GEF domain is found at Thr-49–Gly-287. The tract at residues Ala-288–Ala-319 is disordered. A phosphoserine mark is found at Ser-293, Ser-296, and Ser-308. A PXXP motif is present at residues Pro-331–Pro-334. Thr-333 is modified (phosphothreonine). Residues Ser-336 and Ser-350 each carry the phosphoserine modification. Residue Thr-368 is modified to Phosphothreonine. A disordered region spans residues Asp-380 to Ser-413. Residue Ser-381 is modified to Phosphoserine. Positions Glu-394–Ser-410 are enriched in low complexity. Ser-429 is modified (phosphoserine). Residues Ala-464 to Gln-576 form the PH domain. The segment at Thr-466–Glu-590 is required for stimulation of nucleotide exchange by RALA.

As to quaternary structure, interacts with RALA. Interacts with the SH3 domains of GRB2 and PLCG1. Abundant in brain and testis.

It is found in the cytoplasm. The protein localises to the cell membrane. Functionally, guanine nucleotide exchange factor for the small GTPase RALA. May be involved in cytoskeletal organization. May also be involved in the stimulation of transcription in a Ras-independent fashion. This Mus musculus (Mouse) protein is Ras-specific guanine nucleotide-releasing factor RalGPS2 (Ralgps2).